A 202-amino-acid polypeptide reads, in one-letter code: Small ribosomal subunit protein uS4 (202 aa).

Residues T22–S43 are disordered. Residues M90 to N152 enclose the S4 RNA-binding domain.

It belongs to the universal ribosomal protein uS4 family. Part of the 30S ribosomal subunit. Contacts protein S5. The interaction surface between S4 and S5 is involved in control of translational fidelity.

In terms of biological role, one of the primary rRNA binding proteins, it binds directly to 16S rRNA where it nucleates assembly of the body of the 30S subunit. Its function is as follows. With S5 and S12 plays an important role in translational accuracy. The polypeptide is Small ribosomal subunit protein uS4 (Nostoc punctiforme (strain ATCC 29133 / PCC 73102)).